The chain runs to 335 residues: Leukocyte immunoglobulin-like receptor subfamily B member 4A (335 aa).

The first 23 residues, M1–A23, serve as a signal peptide directing secretion. The Extracellular portion of the chain corresponds to G24–K238. Ig-like C2-type domains lie at Y42–S125 and P124–N212. C49 and C98 are joined by a disulfide. 2 N-linked (GlcNAc...) asparagine glycosylation sites follow: N133 and N191. C144 and C196 are disulfide-bonded. Residues I239–I260 form a helical membrane-spanning segment. Topologically, residues G261–S335 are cytoplasmic. 2 consecutive short sequence motifs (ITIM motif) follow at residues I298–V303 and V320–L325.

In terms of assembly, interacts (when tyrosine phosphorylated) with SH2 domain-containing phosphatases PTPN6/SHP-1 and PTPN11/SHP-2; interaction with PTPN6 enhances inhibition of mast cell activation. In terms of processing, tyrosine phosphorylated. In terms of tissue distribution, expressed on mast cells and natural killer cells (at protein level). Expressed on neutrophils (at protein level). Expressed on eosinophils (at protein level). Expressed on dendritic cells (at protein level). Expressed on memory and marginal zone B cells (at protein level). Expressed on CD8 T cells (at protein level). Expressed in the uterus of pregnant mice where it is detected at day 4.0 of pregnancy with levels dropping at day 4.5. Highly expressed in the luminal epithelium of uterine endometrium with lower levels in the glandular epithelium.

The protein localises to the cell membrane. Inhibitory receptor involved in the down-regulation of the immune response. Receptor for FN1. Receptor for integrin ITGAV/ITGB3. Inhibits IgE-mediated mast cell activation, at least in part through interaction with ITGAV/ITGB3. Also inhibits KITLG/SCF-mediated mast cell activation. Through interaction with ITGAV/ITGB3, inhibits antibody production by memory and marginal zone B cells, probably by suppressing their differentiation into plasma cells. Inhibits IFNG production by CD8 T cells, CD4 T cells and natural killer cells. Inhibits antigen presentation by dendritic cells to T cells, preventing T cell activation. Inhibits lipopolysaccharide-mediated neutrophil-dependent vascular injury. Suppresses the allergic inflammatory response by inhibiting infiltration of neutrophils and eosinophils and preventing mast cell degranulation. Inhibits lysis by natural killer cells. The protein is Leukocyte immunoglobulin-like receptor subfamily B member 4A of Mus musculus (Mouse).